A 480-amino-acid polypeptide reads, in one-letter code: Peptidase S41 family protein ustP (480 aa).

The tract at residues 78-97 (CMPNKKSRPPDPRPSLAVGK) is disordered. A peptidase S41 domain region spans residues 134-336 (DVAVLQLPTF…LKQQGVRSIV (203 aa)).

The protein belongs to the peptidase S41A family.

It functions in the pathway mycotoxin biosynthesis. Functionally, peptidase S41 family protein; part of the gene cluster that mediates the biosynthesis of the secondary metabolite ustiloxin B, an antimitotic tetrapeptide. First, ustA is processed by the subtilisin-like endoprotease Kex2 that is outside the ustiloxin B gene cluster, at the C-terminal side of Arg-Lys, after transfer to Golgi apparatus through the endoplasmic reticulum (ER). Cleavage by KEX2 generates 16 peptides YAIG-I to YAIG-XVI. To process the precursor peptide further, at least two peptidases are necessary to cleave the N-terminal and C-terminal sides of the Tyr-Ala-Ile-Gly core peptide which serves as backbone for the synthesis of ustiloxin B, through cyclization and modification of the tyrosine with a non-protein coding amino acid, norvaline. One of the two peptidases must be the serine peptidase ustP; and the other pepdidase is probably ustH. Macrocyclization of the core peptide derived from ustA requires the tyrosinase ustQ, as well as the homologous oxidases ustYa and ustYb, and leads to the production of the first cyclization product N-desmethylustiloxin F. For the formation of N-desmethylustiloxin F, three oxidation steps are required, hydroxylation at the benzylic position, hydroxylation at either the aromatic ring of Tyr or beta-position of Ile, and oxidative cyclization. UstQ may catalyze the oxidation of a phenol moiety, whereas the ustYa and ustYb are most likely responsible for the remaining two-step oxidations. N-desmethylustiloxin F is then methylated by ustM to yield ustiloxin F which in turn substrate of the cytochrome P450 monooxygenase ustC which catalyzes the formation of S-deoxyustiloxin H. The flavoprotein monooxygenases ustF1 and ustF2 then participate in the modification of the side chain of S-deoxyustiloxin H, leading to the synthesis of an oxime intermediate, via ustiloxin H. Finally, carboxylative dehydration performed by the cysteine desulfurase-like protein ustD yields ustiloxin B. This Aspergillus flavus (strain ATCC 200026 / FGSC A1120 / IAM 13836 / NRRL 3357 / JCM 12722 / SRRC 167) protein is Peptidase S41 family protein ustP.